Here is a 327-residue protein sequence, read N- to C-terminus: MKISILGAGSFGTAIAIALSAHGISVNLWGRDHRNTTHINTYRKNLKYLPTYHLPDNIYATSNIDEVLSDNNTCIILTIPTQQLRTICTQIQHKQHMCKNTPILICSKGIEITSLKFPSEIAEEILQYNPIFILSGPSFAKEIAEHLPCSIVLAGDNKELGESLIEKISNDVLKIIYHQDIIGVQIGAALKNIIAIACGIIAGKNLGNNAVATVITKGMNEIKTLYIAKNHSIDLHTLIGPSCLGDLILTCTTEHSRNMAFGLEIGKGRNINTLIDHNLKLVEGTSTVKPLISLAKKLNVELPICISIYNLLHENISLDKAISNILS.

Residues Ser10, Phe11, Arg31, and Lys108 each contribute to the NADPH site. The sn-glycerol 3-phosphate site is built by Lys108, Gly136, and Ser138. Ala140 serves as a coordination point for NADPH. Sn-glycerol 3-phosphate-binding residues include Lys191, Asp246, Ser256, Arg257, and Asn258. The Proton acceptor role is filled by Lys191. Residue Arg257 coordinates NADPH. NADPH contacts are provided by Leu281 and Glu283.

This sequence belongs to the NAD-dependent glycerol-3-phosphate dehydrogenase family.

Its subcellular location is the cytoplasm. The catalysed reaction is sn-glycerol 3-phosphate + NAD(+) = dihydroxyacetone phosphate + NADH + H(+). It carries out the reaction sn-glycerol 3-phosphate + NADP(+) = dihydroxyacetone phosphate + NADPH + H(+). It functions in the pathway membrane lipid metabolism; glycerophospholipid metabolism. In terms of biological role, catalyzes the reduction of the glycolytic intermediate dihydroxyacetone phosphate (DHAP) to sn-glycerol 3-phosphate (G3P), the key precursor for phospholipid synthesis. The sequence is that of Glycerol-3-phosphate dehydrogenase [NAD(P)+] from Ehrlichia ruminantium (strain Welgevonden).